Reading from the N-terminus, the 332-residue chain is Phenylalanine--tRNA ligase alpha subunit (332 aa).

Glu254 serves as a coordination point for Mg(2+).

This sequence belongs to the class-II aminoacyl-tRNA synthetase family. Phe-tRNA synthetase alpha subunit type 1 subfamily. Tetramer of two alpha and two beta subunits. It depends on Mg(2+) as a cofactor.

Its subcellular location is the cytoplasm. It carries out the reaction tRNA(Phe) + L-phenylalanine + ATP = L-phenylalanyl-tRNA(Phe) + AMP + diphosphate + H(+). This is Phenylalanine--tRNA ligase alpha subunit from Hydrogenovibrio crunogenus (strain DSM 25203 / XCL-2) (Thiomicrospira crunogena).